We begin with the raw amino-acid sequence, 978 residues long: Glycine dehydrogenase (decarboxylating) (978 aa).

The residue at position 726 (Lys-726) is an N6-(pyridoxal phosphate)lysine.

The protein belongs to the GcvP family. In terms of assembly, the glycine cleavage system is composed of four proteins: P, T, L and H. It depends on pyridoxal 5'-phosphate as a cofactor.

It carries out the reaction N(6)-[(R)-lipoyl]-L-lysyl-[glycine-cleavage complex H protein] + glycine + H(+) = N(6)-[(R)-S(8)-aminomethyldihydrolipoyl]-L-lysyl-[glycine-cleavage complex H protein] + CO2. The glycine cleavage system catalyzes the degradation of glycine. The P protein binds the alpha-amino group of glycine through its pyridoxal phosphate cofactor; CO(2) is released and the remaining methylamine moiety is then transferred to the lipoamide cofactor of the H protein. This Paraburkholderia xenovorans (strain LB400) protein is Glycine dehydrogenase (decarboxylating).